The following is a 633-amino-acid chain: DNA topoisomerase 1 (633 aa).

Residues 6-115 (KKYIVVESPA…KNRIVFSEIT (110 aa)) form the Toprim domain. 2 residues coordinate Mg(2+): glutamate 12 and aspartate 84. One can recognise a Topo IA-type catalytic domain in the interval 130–543 (DMKKVRAQLA…EFYESFSSVF (414 aa)). The interaction with DNA stretch occupies residues 164–169 (SAGRVQ). The active-site O-(5'-phospho-DNA)-tyrosine intermediate is the tyrosine 288. Intrachain disulfides connect cysteine 559-cysteine 578 and cysteine 561-cysteine 580. A C4-type zinc finger spans residues 559–580 (CSCGKEMRLSFGKYGFYLKCEC). Residues 601 to 633 (LGRKDSESGSPDGRSVEGKGNLSEKRRKGKKGS) are disordered.

This sequence belongs to the type IA topoisomerase family. As to quaternary structure, monomer. It depends on Mg(2+) as a cofactor.

It catalyses the reaction ATP-independent breakage of single-stranded DNA, followed by passage and rejoining.. Its function is as follows. Releases the supercoiling and torsional tension of DNA, which is introduced during the DNA replication and transcription, by transiently cleaving and rejoining one strand of the DNA duplex. Introduces a single-strand break via transesterification at a target site in duplex DNA. The scissile phosphodiester is attacked by the catalytic tyrosine of the enzyme, resulting in the formation of a DNA-(5'-phosphotyrosyl)-enzyme intermediate and the expulsion of a 3'-OH DNA strand. The free DNA strand then undergoes passage around the unbroken strand, thus removing DNA supercoils. Finally, in the religation step, the DNA 3'-OH attacks the covalent intermediate to expel the active-site tyrosine and restore the DNA phosphodiester backbone. The chain is DNA topoisomerase 1 from Thermotoga maritima (strain ATCC 43589 / DSM 3109 / JCM 10099 / NBRC 100826 / MSB8).